The chain runs to 178 residues: Ribosome maturation factor RimP (178 aa).

This sequence belongs to the RimP family.

Its subcellular location is the cytoplasm. Functionally, required for maturation of 30S ribosomal subunits. The sequence is that of Ribosome maturation factor RimP from Streptococcus pyogenes serotype M5 (strain Manfredo).